We begin with the raw amino-acid sequence, 216 residues long: Probable csgAB operon transcriptional regulatory protein (216 aa).

In terms of domain architecture, HTH luxR-type spans 149-214 (NSTESALLTH…QAVSWANDNL (66 aa)). The segment at residues 173-192 (NNEIARSLFISENTVKTHLY) is a DNA-binding region (H-T-H motif).

Functionally, the master regulator for adhesive curli fimbriae expression; necessary for transcription of the csgAB operon. Plays a positive role in biofilm formation. The polypeptide is Probable csgAB operon transcriptional regulatory protein (Salmonella typhimurium (strain LT2 / SGSC1412 / ATCC 700720)).